The chain runs to 1141 residues: IgM protease (1141 aa).

The signal sequence occupies residues 1–32; it reads MNIQERFSLRKSAVGLVSVSLLCAIYTSTVAA. Cys-195 acts as the Nucleophile in catalysis. Disordered stretches follow at residues 518–544, 725–749, 781–805, and 839–860; these read PDLP…STNL, EKDS…NVET, LEKD…TNVE, and EKDS…ESTS. Over residues 526-544 the composition is skewed to polar residues; the sequence is STVSDVDSLSSQETSSTNL. Composition is skewed to low complexity over residues 738–749 and 795–805; these read EPTSSESTNVET and EPTSSESTNVE. A helical membrane pass occupies residues 1119-1136; that stretch reads IMGVGLLTLVLGSALGLL.

The protein belongs to the peptidase C66 family.

It localises to the cell membrane. It is found in the secreted. Its activity is regulated as follows. IgM cleavage is inhibited by iodoacetamide but not by AEBSF, bestatin, E-64, Z-LVG-CHN(2), or EDTA. Its function is as follows. Catalyzes the specific cleavage of porcine IgM bound to the bacterial surface. Can degrade only IgM but neither IgG nor IgA, and is host specific, as it exclusively cleaves porcine IgM but not IgM from six other species, including human, mouse and a closely related member of the Suidae family. Promotes survival in porcine blood. Is thus involved in a so-far-unknown mechanism of host-pathogen interaction at an early stage of the host immune response. This is IgM protease (ide) from Streptococcus suis (strain P1/7).